Here is a 219-residue protein sequence, read N- to C-terminus: Claudin-20 (219 aa).

At 1–7 (MASAGLQ) the chain is on the cytoplasmic side. Residues 8-28 (LLAFILALSGVSGVLTATLLP) traverse the membrane as a helical segment. Over 29 to 81 (NWKVNVDVDSNIITAIVQLHGLWMDCTWYSTGMFSCALKHSILSLPIHVQAAR) the chain is Extracellular. Residues 82–102 (ATMVLACVLSALGICTSTVGM) traverse the membrane as a helical segment. Over 103–118 (KCTRLGGDRETKSHAS) the chain is Cytoplasmic. A helical membrane pass occupies residues 119–139 (FAGGVCFMSAGISSLISTVWY). Over 140–160 (TKEIIANFLDLTVPESNKHEP) the chain is Extracellular. A helical membrane pass occupies residues 161–181 (GGAIYIGFISAMLLFISGMIF). The Cytoplasmic portion of the chain corresponds to 182 to 219 (CTSCIKRNPEARLDPPTQQPISNTQLENNSTHNLKDYV). The tract at residues 193 to 219 (RLDPPTQQPISNTQLENNSTHNLKDYV) is disordered. Over residues 200–213 (QPISNTQLENNSTH) the composition is skewed to polar residues.

It belongs to the claudin family.

It is found in the cell junction. It localises to the tight junction. The protein localises to the cell membrane. Functionally, plays a major role in tight junction-specific obliteration of the intercellular space, through calcium-independent cell-adhesion activity. The chain is Claudin-20 (CLDN20) from Homo sapiens (Human).